The primary structure comprises 244 residues: Probable transcriptional regulatory protein XfasM23_0940 (244 aa).

The protein belongs to the TACO1 family.

The protein localises to the cytoplasm. This is Probable transcriptional regulatory protein XfasM23_0940 from Xylella fastidiosa (strain M23).